Reading from the N-terminus, the 650-residue chain is Solute carrier family 23 member 2 (650 aa).

Residues 1-20 (MMGIGKNTTSKSMEAGSSTE) show a composition bias toward polar residues. The interval 1-21 (MMGIGKNTTSKSMEAGSSTEG) is disordered. At 9–110 (TSKSMEAGSS…LCIFLGLQHY (102 aa)) the chain is on the cytoplasmic side. A Phosphoserine modification is found at Ser-70. Thr-75 bears the Phosphothreonine mark. A Phosphoserine modification is found at Ser-78. The residue at position 79 (Thr-79) is a Phosphothreonine. Residue Ser-81 is modified to Phosphoserine. Residues 111–131 (LTCFSGTIAVPFLLADAMCVG) form a helical membrane-spanning segment. Residues 132-139 (YDQWATSQ) are Extracellular-facing. A helical transmembrane segment spans residues 140–160 (LIGTIFFCVGITTLLQTTFGC). Position 161 (Arg-161) is a topological domain, cytoplasmic. The chain crosses the membrane as a helical span at residues 162-182 (LPLFQASAFAFLAPARAILSL). The Extracellular segment spans residues 183–218 (DKWKCNTTDVSVANGTAELLHTEHIWYPRIREIQGA). N-linked (GlcNAc...) asparagine glycosylation is found at Asn-188 and Asn-196. Residues 219 to 239 (IIMSSLIEVVIGLLGLPGALL) form a helical membrane-spanning segment. The Cytoplasmic portion of the chain corresponds to 240-266 (KYIGPLTITPTVALIGLSGFQAAGERA). The helical transmembrane segment at 267–284 (GKHWGIAMLTIFLVLLFS) threads the bilayer. The Extracellular portion of the chain corresponds to 285–288 (QYAR). Positions 289–302 (NVKFPLPIYKSKKG) form an intramembrane region, helical. Topologically, residues 303–309 (WTAYKLQ) are extracellular. A helical transmembrane segment spans residues 310-330 (LFKMFPIILAILVSWLLCFIF). The Cytoplasmic portion of the chain corresponds to 331–371 (TVTDVFPPDSTKYGFYARTDARQGVLLVAPWFKVPYPFQWG). The helical transmembrane segment at 372 to 392 (LPTVSAAGVIGMLSAVVASII) threads the bilayer. The Extracellular portion of the chain corresponds to 393–417 (ESIGDYYACARLSCAPPPPIHAINR). A helical membrane pass occupies residues 418 to 438 (GIFVEGLSCVLDGIFGTGNGS). At 439–461 (TSSSPNIGVLGITKVGSRRVIQC) the chain is on the cytoplasmic side. Residues 462–482 (GAALMLALGMIGKFSALFASL) form a helical membrane-spanning segment. At 483–485 (PDP) the chain is on the extracellular side. The helical transmembrane segment at 486–506 (VLGALFCTLFGMITAVGLSNL) threads the bilayer. The Cytoplasmic segment spans residues 507–516 (QFIDLNSSRN). Residues 517–537 (LFVLGFSIFFGLVLPSYLRQN) form a helical membrane-spanning segment. Topologically, residues 538–547 (PLVTGITGID) are extracellular. The chain crosses the membrane as a helical span at residues 548 to 568 (QVLNVLLTTAMFVGGCVAFIL). Residues 569 to 650 (DNTIPGTPEE…SSDEDSQATG (82 aa)) lie on the Cytoplasmic side of the membrane. Thr-649 bears the Phosphothreonine mark.

It belongs to the nucleobase:cation symporter-2 (NCS2) (TC 2.A.40) family. In terms of assembly, interacts with CLSTN3. Post-translationally, phosphorylated. As to expression, ubiquitous.

The protein resides in the cell membrane. The catalysed reaction is L-ascorbate(out) + 2 Na(+)(out) = L-ascorbate(in) + 2 Na(+)(in). Its function is as follows. Sodium/ascorbate cotransporter. Mediates electrogenic uptake of vitamin C, with a stoichiometry of 2 Na(+) for each ascorbate. This is Solute carrier family 23 member 2 (SLC23A2) from Homo sapiens (Human).